The sequence spans 444 residues: uncharacterized protein (444 aa).

Positions 1–11 (MASSAGRDKLR) are enriched in basic and acidic residues. The segment at 1–35 (MASSAGRDKLRSRGQRVFAFGSSTPRDLSHMSKVP) is disordered.

This is an uncharacterized protein from Caenorhabditis elegans.